The sequence spans 279 residues: MKYIGAHVSAAGGIELAVERAVAIGANAFALFTKNQRQWHAPDLTAKTILAFRTACETAGFLPEQILPHDSYLINLGHPEPEALEKSRVAFIDEMQRCEQLGLCYLNFHPGSHLKAISEEESLRRVAESINIALDQTQGVTAVIENTAGQGTNLGWQFEHLAAIIDQVEDKSRVGVCYDTCHAFAAGYDMRTEADCIATFAEFERVVGFNYLKGMHINGAKCTFGSRVDRHHSLQEGNLGTAVFEFIMRDSRFDRIPLILETVNPDIWPDEIRWLRQLG.

9 residues coordinate Zn(2+): His-69, His-109, Glu-145, Asp-179, His-182, His-216, Asp-229, His-231, and Glu-261.

Belongs to the AP endonuclease 2 family. Zn(2+) serves as cofactor.

The catalysed reaction is Endonucleolytic cleavage to 5'-phosphooligonucleotide end-products.. Functionally, endonuclease IV plays a role in DNA repair. It cleaves phosphodiester bonds at apurinic or apyrimidinic (AP) sites, generating a 3'-hydroxyl group and a 5'-terminal sugar phosphate. The sequence is that of Probable endonuclease 4 from Tolumonas auensis (strain DSM 9187 / NBRC 110442 / TA 4).